The primary structure comprises 390 residues: Putative 8-amino-7-oxononanoate synthase (390 aa).

Substrate is bound at residue Arg20. 107-108 (GY) provides a ligand contact to pyridoxal 5'-phosphate. His132 contributes to the substrate binding site. Pyridoxal 5'-phosphate contacts are provided by residues Ser181, 206–209 (DDAH), and 237–240 (TLGK). Lys240 bears the N6-(pyridoxal phosphate)lysine mark. Thr356 contacts substrate.

This sequence belongs to the class-II pyridoxal-phosphate-dependent aminotransferase family. BioF subfamily. Homodimer. The cofactor is pyridoxal 5'-phosphate.

It catalyses the reaction 6-carboxyhexanoyl-[ACP] + L-alanine + H(+) = (8S)-8-amino-7-oxononanoate + holo-[ACP] + CO2. It functions in the pathway cofactor biosynthesis; biotin biosynthesis. Catalyzes the decarboxylative condensation of pimeloyl-[acyl-carrier protein] and L-alanine to produce 8-amino-7-oxononanoate (AON), [acyl-carrier protein], and carbon dioxide. The polypeptide is Putative 8-amino-7-oxononanoate synthase (bioF) (Syntrophotalea carbinolica (strain DSM 2380 / NBRC 103641 / GraBd1) (Pelobacter carbinolicus)).